Reading from the N-terminus, the 179-residue chain is Ubiquitin-conjugating enzyme E2 C (179 aa).

Residues 1 to 31 are disordered; it reads MASQNRDPAATSVAAARKGAEPSGGAARGPV. A2 is subject to N-acetylalanine. At S3 the chain carries Phosphoserine. The UBC core domain maps to 30–175; that stretch reads PVGKRLQQEL…LQETYSKQVT (146 aa). The Glycyl thioester intermediate role is filled by C114.

The protein belongs to the ubiquitin-conjugating enzyme family. In terms of assembly, component of the APC/C complex, composed of at least 14 distinct subunits that assemble into a complex of at least 19 chains with a combined molecular mass of around 1.2 MDa. Within this complex, directly interacts with ANAPC2. Post-translationally, autoubiquitinated by the APC/C complex, leading to its degradation by the proteasome. Its degradation plays a central role in APC/C regulation, allowing cyclin-A accumulation before S phase entry. APC/C substrates inhibit the autoubiquitination of UBE2C/UBCH10 but not its E2 function, hence APC/C remaining active until its substrates have been destroyed.

It carries out the reaction S-ubiquitinyl-[E1 ubiquitin-activating enzyme]-L-cysteine + [E2 ubiquitin-conjugating enzyme]-L-cysteine = [E1 ubiquitin-activating enzyme]-L-cysteine + S-ubiquitinyl-[E2 ubiquitin-conjugating enzyme]-L-cysteine.. The catalysed reaction is S-ubiquitinyl-[E1 ubiquitin-activating enzyme]-L-cysteine + [acceptor protein]-L-lysine = [E1 ubiquitin-activating enzyme]-L-cysteine + N(6)-monoubiquitinyl-[acceptor protein]-L-lysine.. It functions in the pathway protein modification; protein ubiquitination. Accepts ubiquitin from the E1 complex and catalyzes its covalent attachment to other proteins. In vitro catalyzes 'Lys-11'- and 'Lys-48'-linked polyubiquitination. Acts as an essential factor of the anaphase promoting complex/cyclosome (APC/C), a cell cycle-regulated ubiquitin ligase that controls progression through mitosis. Acts by initiating 'Lys-11'-linked polyubiquitin chains on APC/C substrates, leading to the degradation of APC/C substrates by the proteasome and promoting mitotic exit. In Homo sapiens (Human), this protein is Ubiquitin-conjugating enzyme E2 C (UBE2C).